Here is a 30-residue protein sequence, read N- to C-terminus: Acyl-CoA-binding protein 1 (30 aa).

Residues 1 to 15 show a composition bias toward basic and acidic residues; the sequence is ALKDEFEEHAEKAKT. The disordered stretch occupies residues 1-30; the sequence is ALKDEFEEHAEKAKTLPENTSNENKLILYG. In terms of domain architecture, ACB spans 2–30; the sequence is LKDEFEEHAEKAKTLPENTSNENKLILYG.

Belongs to the ACBP family.

The protein resides in the cytoplasm. Its function is as follows. Binds medium- and long-chain acyl-CoA esters with very high affinity and may function as an intracellular carrier of acyl-CoA esters. The protein is Acyl-CoA-binding protein 1 of Digitalis lanata (Grecian foxglove).